A 169-amino-acid polypeptide reads, in one-letter code: Ubiquitin-fold modifier-conjugating enzyme 1 (169 aa).

The active-site Glycyl thioester intermediate is Cys116.

Belongs to the ubiquitin-conjugating enzyme family. UFC1 subfamily.

Functionally, E2-like enzyme which forms an intermediate with UFM1 via a thioester linkage. This is Ubiquitin-fold modifier-conjugating enzyme 1 from Branchiostoma floridae (Florida lancelet).